The primary structure comprises 1023 residues: 1-phosphatidylinositol 4,5-bisphosphate phosphodiesterase beta-4 (1023 aa).

Residues 149 to 299 (QEMDHPLAHY…LKRKILIKKQ (151 aa)) form the PI-PLC X-box domain. Active-site residues include His164 and His211. Residues 413–529 (LSTMINYAQP…GYLLKPDFMR (117 aa)) enclose the PI-PLC Y-box domain. A C2 domain is found at 532-657 (DRTFDPFSET…SLRNEGNKPL (126 aa)). Disordered regions lie at residues 711-742 (ADVPSDTSKNDKKGKANTAKANVTPQSSSELR) and 930-958 (KISMENSKAISQDKSIKNKAERERRVREL). Composition is skewed to polar residues over residues 729 to 742 (AKANVTPQSSSELR) and 933 to 942 (MENSKAISQD). At Thr734 the chain carries Phosphothreonine. A compositionally biased stretch (basic and acidic residues) spans 943-957 (KSIKNKAERERRVRE).

It depends on Ca(2+) as a cofactor. In terms of processing, the N-terminus is blocked. In terms of tissue distribution, preferentially expressed in the retina.

The protein localises to the cell membrane. The catalysed reaction is a 1,2-diacyl-sn-glycero-3-phospho-(1D-myo-inositol-4,5-bisphosphate) + H2O = 1D-myo-inositol 1,4,5-trisphosphate + a 1,2-diacyl-sn-glycerol + H(+). It carries out the reaction a 1,2-diacyl-sn-glycero-3-phospho-(1D-myo-inositol) + H2O = 1D-myo-inositol 1-phosphate + a 1,2-diacyl-sn-glycerol + H(+). Its function is as follows. Activated phosphatidylinositol-specific phospholipase C enzymes catalyze the production of the second messenger molecules diacylglycerol (DAG) and inositol 1,4,5-trisphosphate (IP3) involved in G-protein coupled receptor signaling pathways. PLCB4 is a direct effector of the endothelin receptor signaling pathway that plays an essential role in lower jaw and middle ear structures development. This chain is 1-phosphatidylinositol 4,5-bisphosphate phosphodiesterase beta-4 (PLCB4), found in Bos taurus (Bovine).